The following is a 281-amino-acid chain: 2,3,4,5-tetrahydropyridine-2,6-dicarboxylate N-succinyltransferase (281 aa).

Substrate is bound by residues Arg-108 and Asp-145.

This sequence belongs to the transferase hexapeptide repeat family. As to quaternary structure, homotrimer.

It is found in the cytoplasm. The catalysed reaction is (S)-2,3,4,5-tetrahydrodipicolinate + succinyl-CoA + H2O = (S)-2-succinylamino-6-oxoheptanedioate + CoA. Its pathway is amino-acid biosynthesis; L-lysine biosynthesis via DAP pathway; LL-2,6-diaminopimelate from (S)-tetrahydrodipicolinate (succinylase route): step 1/3. This chain is 2,3,4,5-tetrahydropyridine-2,6-dicarboxylate N-succinyltransferase, found in Methylobacterium nodulans (strain LMG 21967 / CNCM I-2342 / ORS 2060).